The sequence spans 213 residues: Small ribosomal subunit protein uS3 (213 aa).

One can recognise a KH type-2 domain in the interval isoleucine 38–lysine 106.

Belongs to the universal ribosomal protein uS3 family. Part of the 30S ribosomal subunit. Forms a tight complex with proteins S10 and S14.

Binds the lower part of the 30S subunit head. Binds mRNA in the 70S ribosome, positioning it for translation. This is Small ribosomal subunit protein uS3 from Oceanobacillus iheyensis (strain DSM 14371 / CIP 107618 / JCM 11309 / KCTC 3954 / HTE831).